A 139-amino-acid polypeptide reads, in one-letter code: Putative pre-16S rRNA nuclease (139 aa).

This sequence belongs to the YqgF nuclease family.

Its subcellular location is the cytoplasm. Functionally, could be a nuclease involved in processing of the 5'-end of pre-16S rRNA. This Streptococcus thermophilus (strain CNRZ 1066) protein is Putative pre-16S rRNA nuclease.